A 2028-amino-acid chain; its full sequence is Protein Daple (2028 aa).

A Calponin-homology (CH) domain is found at 11-131 (LFLQSPLVTW…KVLLLVLGCA (121 aa)). Residues 222-250 (AQHPPSPIKSSSADSTPSPTSSLSSEDKQ) are disordered. Ser-227 and Ser-239 each carry phosphoserine. Positions 229–245 (IKSSSADSTPSPTSSLS) are enriched in low complexity. Coiled-coil stretches lie at residues 247–428 (EDKQ…SMNE), 456–1017 (ELNE…QGEG), 1045–1094 (HKEA…SSQI), and 1139–1393 (LQNH…DQYK). Ser-486 carries the post-translational modification Phosphoserine. A compositionally biased stretch (polar residues) spans 1011–1024 (RQNQGEGQHLQNSF). A disordered region spans residues 1011–1043 (RQNQGEGQHLQNSFKHPAGKTAASHQGKEAWGP). The span at 1419–1428 (KEGSRERLKS) shows a compositional bias: basic and acidic residues. Disordered regions lie at residues 1419-1724 (KEGS…GAKM) and 1736-1803 (AAPT…SLSR). Low complexity-rich tracts occupy residues 1439-1450 (SSDPASPAASQP), 1517-1534 (SRTC…NSTP), and 1568-1588 (SRPS…PLNL). A Phosphoserine modification is found at Ser-1444. Residues 1589-1604 (KGSSEQLHGRSESFSS) show a composition bias toward polar residues. Ser-1601 is modified (phosphoserine). A GBA motif is present at residues 1661-1691 (CSASPSSEMVTLEEFLEESNRSSPTHDTPSC). Residues 1689 to 1704 (PSCRDDLLSDYFRKAS) are compositionally biased toward basic and acidic residues. Low complexity predominate over residues 1792–1803 (HAPASRSASLSR). Ser-1806 bears the Phosphoserine mark. Residues 1816 to 2021 (SGPEACKQES…PEPGGDPQTV (206 aa)) are disordered. Residues 1842–1855 (SHTLQSPAPPSSHS) are compositionally biased toward polar residues. A compositionally biased stretch (basic and acidic residues) spans 1879-1897 (RPLDTRRFSLAPPKEERLA). Residues 1902–1924 (SATAPAIATAGAGAAAAGSGSNS) are compositionally biased toward low complexity. Thr-1954 carries the post-translational modification Phosphothreonine. The PDZ-binding motif lies at 2025 to 2028 (YGCV). The interval 2026–2028 (GCV) is DVL1-binding.

It belongs to the CCDC88 family. In terms of assembly, homooligomer. Interacts with DVL1 (via PDZ domain); dissociates following initiation of non-canonical Wnt signaling. Interacts (via C-terminus) with ligand-activated Wnt receptor FZD7; competes with DVL1 for binding to FZD7 and displaces DVL1 from ligand-activated FZD7. Interacts (via GBA motif) with guanine nucleotide-binding protein G(i) alpha subunits GNAI1, GNAI2 and GNAI3 (inactive GDP-bound form); interacts with higher affinity with GNAI1 and GNAI3 than with GNAI2 and interaction leads to G(i) alpha subunit activation. Does not interact with GNAO1.

Its subcellular location is the cytoplasm. The protein localises to the cell junction. Required for activation of guanine nucleotide-binding proteins (G-proteins) during non-canonical Wnt signaling. Binds to ligand-activated Wnt receptor FZD7, displacing DVL1 from the FZD7 receptor and leading to inhibition of canonical Wnt signaling. Acts as a non-receptor guanine nucleotide exchange factor by also binding to guanine nucleotide-binding protein G(i) alpha (Gi-alpha) subunits, leading to their activation. Binding to Gi-alpha subunits displaces the beta and gamma subunits from the heterotrimeric G-protein complex, triggering non-canonical Wnt responses such as activation of RAC1 and PI3K-AKT signaling. Promotes apical constriction of cells via ARHGEF18. In Homo sapiens (Human), this protein is Protein Daple (CCDC88C).